Consider the following 372-residue polypeptide: Glutamate 5-kinase (372 aa).

Lysine 14 serves as a coordination point for ATP. Substrate-binding residues include serine 54, aspartate 141, and asparagine 153. Threonine 173–aspartate 174 contacts ATP. The region spanning arginine 280–leucine 358 is the PUA domain.

Belongs to the glutamate 5-kinase family.

It localises to the cytoplasm. The enzyme catalyses L-glutamate + ATP = L-glutamyl 5-phosphate + ADP. It functions in the pathway amino-acid biosynthesis; L-proline biosynthesis; L-glutamate 5-semialdehyde from L-glutamate: step 1/2. Catalyzes the transfer of a phosphate group to glutamate to form L-glutamate 5-phosphate. In Cupriavidus metallidurans (strain ATCC 43123 / DSM 2839 / NBRC 102507 / CH34) (Ralstonia metallidurans), this protein is Glutamate 5-kinase.